A 349-amino-acid chain; its full sequence is 4-hydroxythreonine-4-phosphate dehydrogenase (349 aa).

Thr-136 serves as a coordination point for substrate. Positions 171, 216, and 281 each coordinate a divalent metal cation. The substrate site is built by Lys-289, Asn-298, and Arg-307.

This sequence belongs to the PdxA family. Homodimer. Requires a divalent metal cation as cofactor.

Its subcellular location is the cytoplasm. The enzyme catalyses 4-(phosphooxy)-L-threonine + NAD(+) = 3-amino-2-oxopropyl phosphate + CO2 + NADH. It participates in cofactor biosynthesis; pyridoxine 5'-phosphate biosynthesis; pyridoxine 5'-phosphate from D-erythrose 4-phosphate: step 4/5. Functionally, catalyzes the NAD(P)-dependent oxidation of 4-(phosphooxy)-L-threonine (HTP) into 2-amino-3-oxo-4-(phosphooxy)butyric acid which spontaneously decarboxylates to form 3-amino-2-oxopropyl phosphate (AHAP). The polypeptide is 4-hydroxythreonine-4-phosphate dehydrogenase (Synechocystis sp. (strain ATCC 27184 / PCC 6803 / Kazusa)).